The following is a 491-amino-acid chain: Ketol-acid reductoisomerase (NADP(+)) (491 aa).

A KARI N-terminal Rossmann domain is found at 15-208 (AQLGKCRFMG…GGHRAGVLES (194 aa)). NADP(+)-binding positions include 45-48 (CGAQ), Arg-68, Arg-76, Ser-78, and 108-110 (DKQ). The active site involves His-132. Gly-158 lines the NADP(+) pocket. 2 KARI C-terminal knotted domains span residues 209 to 344 (SFVA…TAPQ) and 345 to 484 (YEGK…MTDM). Mg(2+) contacts are provided by Asp-217, Glu-221, Glu-389, and Glu-393. Ser-414 provides a ligand contact to substrate.

It belongs to the ketol-acid reductoisomerase family. Mg(2+) is required as a cofactor.

The enzyme catalyses (2R)-2,3-dihydroxy-3-methylbutanoate + NADP(+) = (2S)-2-acetolactate + NADPH + H(+). It carries out the reaction (2R,3R)-2,3-dihydroxy-3-methylpentanoate + NADP(+) = (S)-2-ethyl-2-hydroxy-3-oxobutanoate + NADPH + H(+). It functions in the pathway amino-acid biosynthesis; L-isoleucine biosynthesis; L-isoleucine from 2-oxobutanoate: step 2/4. The protein operates within amino-acid biosynthesis; L-valine biosynthesis; L-valine from pyruvate: step 2/4. Its function is as follows. Involved in the biosynthesis of branched-chain amino acids (BCAA). Catalyzes an alkyl-migration followed by a ketol-acid reduction of (S)-2-acetolactate (S2AL) to yield (R)-2,3-dihydroxy-isovalerate. In the isomerase reaction, S2AL is rearranged via a Mg-dependent methyl migration to produce 3-hydroxy-3-methyl-2-ketobutyrate (HMKB). In the reductase reaction, this 2-ketoacid undergoes a metal-dependent reduction by NADPH to yield (R)-2,3-dihydroxy-isovalerate. This is Ketol-acid reductoisomerase (NADP(+)) from Escherichia coli O157:H7.